The chain runs to 169 residues: MAQGDDNKQAIGQIIRQEQALIFPSLDENDAFSLGQRIRDIAVKDKLGIAIDISLWDRRLFFAATAGATADNIEWLRRKFNVVRRFHVSTYRLVLEQNREDRMFAPYKALDVADYALAGGGFPIRVSGAGVIGAVIVSGLPQREDHNLVVRAVAEHVGQDPVALALPAA.

Belongs to the UPF0303 family.

In Brucella ovis (strain ATCC 25840 / 63/290 / NCTC 10512), this protein is UPF0303 protein BOV_1367.